Here is a 283-residue protein sequence, read N- to C-terminus: Probable endonuclease 4 (283 aa).

Zn(2+) contacts are provided by His69, His113, Glu148, Asp182, His185, His217, Asp230, His232, and Glu262.

The protein belongs to the AP endonuclease 2 family. Requires Zn(2+) as cofactor.

The enzyme catalyses Endonucleolytic cleavage to 5'-phosphooligonucleotide end-products.. Functionally, endonuclease IV plays a role in DNA repair. It cleaves phosphodiester bonds at apurinic or apyrimidinic (AP) sites, generating a 3'-hydroxyl group and a 5'-terminal sugar phosphate. This Bifidobacterium longum (strain DJO10A) protein is Probable endonuclease 4.